We begin with the raw amino-acid sequence, 555 residues long: MSSSDARSRIRDRGYSEVPRDTSCPDGTIRTFQSLHSSELAVSADPLPPPPLPLQPPFGPSFYSSDTEEPAVAPDLKPVRRFVPDSWKNFFRGKKKDPEWDNPVSDIRYISDGVECSPPASPARANHHPYKDPSRGSQGTFNSQHEADAMFAHDPYASLDRRTQTARTYSEKVEEYNLRYAYMKSWAGLLRILGVVELLLGAGVFACVTAYIHKDNEWYNLFGYTQPYGMGGLGSLGNTYGGYYYSGPKTPFVLVVAGLAWITTIIILVLGMSMYYRTILLDSNWWPLTEFGVNVALFILYMAAAIVYVNDTNRGGLCYYPLFNTPMNAMFCRVEGGQIAAMIFLFVTMIVYLVSALVCLKLWRHEAARRHREFLEQQEINDPSLSSKRKMCEAAISDRQRDQEVNVKDLRTTTKMTPELLSGHIPPGHIPKPIVMPDYVAKYPVIQTDDDRERYKAVFQDQFSEYKELSAEVQAILRKFDELDTVMSRLPHHSENRQEHERISRIHEEFRKKKNDPSFLEKKERCDYLKNKLSHIKQRIQEYDKVMNWDTQGYP.

Residues 1 to 20 (MSSSDARSRIRDRGYSEVPR) show a composition bias toward basic and acidic residues. The segment at 1–71 (MSSSDARSRI…FYSSDTEEPA (71 aa)) is disordered. Residues 1-191 (MSSSDARSRI…YMKSWAGLLR (191 aa)) are Cytoplasmic-facing. Over residues 46 to 59 (PLPPPPLPLQPPFG) the composition is skewed to pro residues. Phosphoserine is present on residues serine 117, serine 121, and serine 158. The interval 118–142 (PPASPARANHHPYKDPSRGSQGTFN) is disordered. Phosphothreonine is present on threonine 163. In terms of domain architecture, MARVEL spans 185–364 (SWAGLLRILG…SALVCLKLWR (180 aa)). Residues 192–212 (ILGVVELLLGAGVFACVTAYI) traverse the membrane as a helical segment. Residues 213–251 (HKDNEWYNLFGYTQPYGMGGLGSLGNTYGGYYYSGPKTP) lie on the Extracellular side of the membrane. A helical membrane pass occupies residues 252-272 (FVLVVAGLAWITTIIILVLGM). At 273–288 (SMYYRTILLDSNWWPL) the chain is on the cytoplasmic side. Residues 289-309 (TEFGVNVALFILYMAAAIVYV) traverse the membrane as a helical segment. Over 310 to 338 (NDTNRGGLCYYPLFNTPMNAMFCRVEGGQ) the chain is Extracellular. Residues 339–359 (IAAMIFLFVTMIVYLVSALVC) form a helical membrane-spanning segment. Topologically, residues 360 to 555 (LKLWRHEAAR…VMNWDTQGYP (196 aa)) are cytoplasmic. Serine 384 bears the Phosphoserine mark. Residue lysine 408 forms a Glycyl lysine isopeptide (Lys-Gly) (interchain with G-Cter in ubiquitin) linkage. Residues 437-548 (PDYVAKYPVI…RIQEYDKVMN (112 aa)) enclose the OCEL domain. Residues 521 to 545 (EKKERCDYLKNKLSHIKQRIQEYDK) are a coiled coil.

This sequence belongs to the ELL/occludin family. Interacts with TJP1. Interacts with the ubiquitin ligase ITCH. Interacts (via C-terminal cytoplasmic domain) with LSR (via the cytoplasmic domain), ILDR1 and ILDR2; the interaction is required to recruit MARVELD2 to tricellular contacts. Post-translationally, ubiquitinated by ITCH; but this ubiquitination does not lead to proteasomal degradation. Polyubiquitinated at Lys-408 via 'Lys-63'-linked ubiquitin chains; deubiquitinated by USP53. In terms of processing, phosphorylated. As to expression, detected in small intestine, stomach and kidney, in epithelial cells. Detected in pancreas, retina and lung, and in stria vascularis, utricle and the organ of Conti in the inner ear (at protein level). Predominantly detected in small intestine, lung and kidney, with lower levels in liver, testis and brain. In colon, expressed in the entire crypts.

It is found in the cell membrane. It localises to the cell junction. Its subcellular location is the tight junction. Its function is as follows. Plays a role in the formation of tricellular tight junctions and of epithelial barriers. Required for normal hearing via its role in the separation of the endolymphatic and perilymphatic spaces of the organ of Corti in the inner ear, and for normal survival of hair cells in the organ of Corti. This Mus musculus (Mouse) protein is MARVEL domain-containing protein 2.